The chain runs to 824 residues: Dapper 1-B (824 aa).

3 disordered regions span residues 1–33 (MKPIPAAPEPLGQHQDSPRRKDKGEAESERQRT), 131–150 (EEHLETDSRPSSGFYELSDG), and 515–534 (HASSSFDERPPLDFKSEGSS). The segment at 2–343 (KPIPAAPEPL…PVRTNKPRTS (342 aa)) is interaction with tcf7l1-A. The segment covering 16-33 (DSPRRKDKGEAESERQRT) has biased composition (basic and acidic residues). Positions 84–139 (EEKFLEDNILLLKKQLNCLRKRDAGLLSQLHELDKQINDLRIDVEKTEEHLETDSR) form a coiled coil. Basic and acidic residues predominate over residues 520 to 530 (FDERPPLDFKS). The PDZ-binding motif lies at 821–824 (MTTV).

It belongs to the dapper family. In terms of assembly, interacts with dbf4 and tcf7l1-A. Interacts with dvl2/dsh; the interaction is required for dact1-b phosphorylation by CaMK1D and seems to become disrupted by the phosphorylation. Post-translationally, phosphorylated by CaMK1D; the phosphorylation requires binding to dvl2/dsh. As to expression, expressed both in the dorsal lip in early gastrula and throughout the posterior presumptive ectoderm in early neurula. Expressed in the dorsal neural folds at the tailbud stage and highly expressed in the tadpole head, including the brain, retina and cartilaginous branchial arch derivatives.

Its subcellular location is the cytoplasm. The protein resides in the nucleus. Involved in regulation of intracellular signaling pathways during development. Specifically thought to play a role in canonical and/or non-canonical Wnt signaling pathways through interaction with DSH (Dishevelled) family proteins. Binds to dvl2 to regulate the degradation of beta-catenin (ctnnb1-A and possibly ctnnb1-B), thereby modulating the transcriptional activation of target genes of the Wnt signaling pathway. Seems to promote beta-catenin degradation if not phosphorylated and to block beta-catenin degradation if phosphorylated by CaMK1D. Involved in regulation of catenin delta/ctnnd1 protein level. May also bind to and directly stimulate the activity of tcf7l1-A. Also regulates the activation by dvl2 of jnk, a component of ctnnb1/beta-catenin-independent frizzled signaling. Required for notochord and head formation. In Xenopus laevis (African clawed frog), this protein is Dapper 1-B (dact1-b).